Consider the following 392-residue polypeptide: Phospho-N-acetylmuramoyl-pentapeptide-transferase (392 aa).

10 helical membrane passes run 28–48 (IIAA…KLIA), 76–96 (TMGG…FADL), 101–121 (VWVM…DDWL), 137–157 (MVLQ…TWTL), 181–201 (WFNP…VVGT), 213–233 (GLAI…CYVA), 268–288 (GAEL…FLWF), 295–315 (VFMG…LAML), 320–340 (VVSA…MIQV), and 369–389 (KIIV…LLSL).

The protein belongs to the glycosyltransferase 4 family. MraY subfamily. Requires Mg(2+) as cofactor.

The protein resides in the cell inner membrane. The enzyme catalyses UDP-N-acetyl-alpha-D-muramoyl-L-alanyl-gamma-D-glutamyl-meso-2,6-diaminopimeloyl-D-alanyl-D-alanine + di-trans,octa-cis-undecaprenyl phosphate = di-trans,octa-cis-undecaprenyl diphospho-N-acetyl-alpha-D-muramoyl-L-alanyl-D-glutamyl-meso-2,6-diaminopimeloyl-D-alanyl-D-alanine + UMP. It functions in the pathway cell wall biogenesis; peptidoglycan biosynthesis. Catalyzes the initial step of the lipid cycle reactions in the biosynthesis of the cell wall peptidoglycan: transfers peptidoglycan precursor phospho-MurNAc-pentapeptide from UDP-MurNAc-pentapeptide onto the lipid carrier undecaprenyl phosphate, yielding undecaprenyl-pyrophosphoryl-MurNAc-pentapeptide, known as lipid I. In Myxococcus xanthus (strain DK1622), this protein is Phospho-N-acetylmuramoyl-pentapeptide-transferase.